The chain runs to 623 residues: tRNA uridine 5-carboxymethylaminomethyl modification enzyme MnmG (623 aa).

12–17 provides a ligand contact to FAD; sequence GAGHAG. 272–286 is a binding site for NAD(+); the sequence is GPRYCPSIEDKINRF.

The protein belongs to the MnmG family. As to quaternary structure, homodimer. Heterotetramer of two MnmE and two MnmG subunits. FAD is required as a cofactor.

It is found in the cytoplasm. NAD-binding protein involved in the addition of a carboxymethylaminomethyl (cmnm) group at the wobble position (U34) of certain tRNAs, forming tRNA-cmnm(5)s(2)U34. This Flavobacterium psychrophilum (strain ATCC 49511 / DSM 21280 / CIP 103535 / JIP02/86) protein is tRNA uridine 5-carboxymethylaminomethyl modification enzyme MnmG.